The primary structure comprises 372 residues: Cytochrome b (372 aa).

4 consecutive transmembrane segments (helical) span residues 25–45 (FGSMLLTCLILQIMTGFFLAI), 69–90 (WIMQNLHAIGASLFFICIYIHI), 105–125 (WLSGTTLLIILMATAFFGYVL), and 170–190 (FFALHFILPFTIISLSSIHII). The heme b site is built by H75 and H89. 2 residues coordinate heme b: H174 and H188. H193 serves as a coordination point for a ubiquinone. 4 consecutive transmembrane segments (helical) span residues 218-238 (YKDMLMIIIMTAILFLILSFS), 280-300 (LGGTLALVMSVMILTTAPFTH), 312-332 (LSQIVFWTLIATFITITWTAT), and 339-358 (FISISQTASIFYFSFFIMNP).

It belongs to the cytochrome b family. The cytochrome bc1 complex contains 3 respiratory subunits (MT-CYB, CYC1 and UQCRFS1), 2 core proteins (UQCRC1 and UQCRC2) and probably 6 low-molecular weight proteins. It depends on heme b as a cofactor.

The protein localises to the mitochondrion inner membrane. Its function is as follows. Component of the ubiquinol-cytochrome c reductase complex (complex III or cytochrome b-c1 complex) that is part of the mitochondrial respiratory chain. The b-c1 complex mediates electron transfer from ubiquinol to cytochrome c. Contributes to the generation of a proton gradient across the mitochondrial membrane that is then used for ATP synthesis. This Walterinnesia aegyptia (Desert black snake) protein is Cytochrome b (MT-CYB).